Here is a 125-residue protein sequence, read N- to C-terminus: Aspartate 1-decarboxylase (125 aa).

The active-site Schiff-base intermediate with substrate; via pyruvic acid is the S25. S25 is subject to Pyruvic acid (Ser). T57 provides a ligand contact to substrate. Y58 functions as the Proton donor in the catalytic mechanism. 71-73 (GAA) contributes to the substrate binding site.

The protein belongs to the PanD family. Heterooctamer of four alpha and four beta subunits. The cofactor is pyruvate. Post-translationally, is synthesized initially as an inactive proenzyme, which is activated by self-cleavage at a specific serine bond to produce a beta-subunit with a hydroxyl group at its C-terminus and an alpha-subunit with a pyruvoyl group at its N-terminus.

It is found in the cytoplasm. It catalyses the reaction L-aspartate + H(+) = beta-alanine + CO2. It functions in the pathway cofactor biosynthesis; (R)-pantothenate biosynthesis; beta-alanine from L-aspartate: step 1/1. Functionally, catalyzes the pyruvoyl-dependent decarboxylation of aspartate to produce beta-alanine. This is Aspartate 1-decarboxylase from Hydrogenobaculum sp. (strain Y04AAS1).